A 307-amino-acid chain; its full sequence is D-alanine--D-alanine ligase (307 aa).

In terms of domain architecture, ATP-grasp spans 101–301 (KTVMRAAGVS…FGELVRWMVE (201 aa)). 127 to 182 (PLTPPYVVKPIAEGSSMGVIIVRDERSHPPQILASDEWVYGEEVLAETYVAGRELT) contacts ATP. Mg(2+)-binding residues include aspartate 251, glutamate 268, and asparagine 270.

It belongs to the D-alanine--D-alanine ligase family. Mg(2+) serves as cofactor. The cofactor is Mn(2+).

It localises to the cytoplasm. The catalysed reaction is 2 D-alanine + ATP = D-alanyl-D-alanine + ADP + phosphate + H(+). It participates in cell wall biogenesis; peptidoglycan biosynthesis. In terms of biological role, cell wall formation. This is D-alanine--D-alanine ligase from Methylorubrum extorquens (strain PA1) (Methylobacterium extorquens).